Consider the following 333-residue polypeptide: Cell shape-determining protein Mbl (333 aa).

Residues 12–14 (TAN), 156–158 (GGT), 204–207 (EDIK), and 284–287 (GGAL) each bind ATP.

It belongs to the FtsA/MreB family. In terms of assembly, forms polymers.

The protein localises to the cytoplasm. Functionally, forms membrane-associated dynamic filaments that are essential for cell shape determination. Acts by regulating cell wall synthesis and cell elongation, and thus cell shape. A feedback loop between cell geometry and Mbl localization may maintain elongated cell shape by targeting cell wall growth to regions of negative cell wall curvature. The polypeptide is Cell shape-determining protein Mbl (Bacillus cereus (strain ATCC 10987 / NRS 248)).